The following is a 426-amino-acid chain: Serine--tRNA ligase (426 aa).

233-235 (TAE) provides a ligand contact to L-serine. 264-266 (RSE) lines the ATP pocket. E287 is an L-serine binding site. 351-354 (EISS) lines the ATP pocket. Residue S387 coordinates L-serine.

This sequence belongs to the class-II aminoacyl-tRNA synthetase family. Type-1 seryl-tRNA synthetase subfamily. Homodimer. The tRNA molecule binds across the dimer.

Its subcellular location is the cytoplasm. It carries out the reaction tRNA(Ser) + L-serine + ATP = L-seryl-tRNA(Ser) + AMP + diphosphate + H(+). It catalyses the reaction tRNA(Sec) + L-serine + ATP = L-seryl-tRNA(Sec) + AMP + diphosphate + H(+). The protein operates within aminoacyl-tRNA biosynthesis; selenocysteinyl-tRNA(Sec) biosynthesis; L-seryl-tRNA(Sec) from L-serine and tRNA(Sec): step 1/1. In terms of biological role, catalyzes the attachment of serine to tRNA(Ser). Is also able to aminoacylate tRNA(Sec) with serine, to form the misacylated tRNA L-seryl-tRNA(Sec), which will be further converted into selenocysteinyl-tRNA(Sec). The polypeptide is Serine--tRNA ligase (Clostridium botulinum (strain Kyoto / Type A2)).